The following is a 92-amino-acid chain: Small ribosomal subunit protein uS19 (92 aa).

This sequence belongs to the universal ribosomal protein uS19 family.

Functionally, protein S19 forms a complex with S13 that binds strongly to the 16S ribosomal RNA. The polypeptide is Small ribosomal subunit protein uS19 (Borrelia hermsii (strain HS1 / DAH)).